The primary structure comprises 272 residues: MGQKINPNGFRLGITTDHVSHWFADSHKEGQRYADFLKEDVKIRELMTTGMERAGISKVEIERTRDRVRVDIHTARPGIVIGRRGAEADRIRGELEKLTGKQIQLNILEVKNPETDAQLVAQGVAEQLASRVAFRRAMKKAIQSAMRAGAQGIRIQCSGRLGGAEMSRSEFYREGRVPLHTLRANIDFGKFEAKTTFGRIGVKVWIYKGDLTAKELAAKEAAQPSGRGRGGERRGGGERRRRNDRAERAPRQENAGAGAETPAAAPAEGGNA.

Positions 43–111 constitute a KH type-2 domain; sequence IRELMTTGME…QIQLNILEVK (69 aa). The tract at residues 218-272 is disordered; the sequence is AKEAAQPSGRGRGGERRGGGERRRRNDRAERAPRQENAGAGAETPAAAPAEGGNA. The segment covering 229–238 has biased composition (basic and acidic residues); it reads RGGERRGGGE. Residues 253–272 are compositionally biased toward low complexity; it reads ENAGAGAETPAAAPAEGGNA.

Belongs to the universal ribosomal protein uS3 family. In terms of assembly, part of the 30S ribosomal subunit. Forms a tight complex with proteins S10 and S14.

Functionally, binds the lower part of the 30S subunit head. Binds mRNA in the 70S ribosome, positioning it for translation. In Micrococcus luteus (strain ATCC 4698 / DSM 20030 / JCM 1464 / CCM 169 / CCUG 5858 / IAM 1056 / NBRC 3333 / NCIMB 9278 / NCTC 2665 / VKM Ac-2230) (Micrococcus lysodeikticus), this protein is Small ribosomal subunit protein uS3.